Reading from the N-terminus, the 457-residue chain is Multidrug resistance protein MdtK (457 aa).

Helical transmembrane passes span 11–31 (LLAL…MGVV), 46–66 (AVAV…GLLL), 93–113 (WLAL…DHVI), 127–147 (AVGF…FQVL), 160–180 (GMVI…IFIY), 188–208 (LGGV…FLMM), 243–263 (LPVA…ALLV), 283–301 (LMFM…RVGF), 316–336 (YTSM…TIVF), 357–377 (LMLL…GSGV), 387–407 (IFFI…YLLG), and 418–438 (PAGF…LMVL).

Belongs to the multi antimicrobial extrusion (MATE) (TC 2.A.66.1) family. MdtK subfamily.

It is found in the cell inner membrane. Its function is as follows. Multidrug efflux pump that functions probably as a Na(+)/drug antiporter. The sequence is that of Multidrug resistance protein MdtK from Yersinia pseudotuberculosis serotype O:1b (strain IP 31758).